A 127-amino-acid polypeptide reads, in one-letter code: Fluoride-specific ion channel FluC (127 aa).

4 helical membrane-spanning segments follow: residues 6–26 (LAIS…GLGF), 37–57 (TLLA…FFAA), 67–87 (LLVI…SAEV), and 96–116 (LLWA…MTLL). Na(+)-binding residues include G75 and T78.

The protein belongs to the fluoride channel Fluc/FEX (TC 1.A.43) family.

The protein localises to the cell inner membrane. It carries out the reaction fluoride(in) = fluoride(out). Na(+) is not transported, but it plays an essential structural role and its presence is essential for fluoride channel function. Fluoride-specific ion channel. Important for reducing fluoride concentration in the cell, thus reducing its toxicity. The sequence is that of Fluoride-specific ion channel FluC from Tolumonas auensis (strain DSM 9187 / NBRC 110442 / TA 4).